The following is a 42-amino-acid chain: Kappa-actitoxin-Ael2a (42 aa).

3 cysteine pairs are disulfide-bonded: cysteine 4–cysteine 37, cysteine 6–cysteine 30, and cysteine 20–cysteine 38.

The protein belongs to the sea anemone type 3 (BDS) potassium channel toxin family.

Its subcellular location is the secreted. It is found in the nematocyst. Functionally, peptide with both antimicrobial and neurotoxin activities. This toxin acts both on ERG potassium channels and sodium channels. It potently and reversibly inhibits human Kv11.1/KCNH2/ERG1 (IC(50)=34 nM), rat Kv11.1/KCNH2/ERG1 and Kv11.3/KCNH7/ERG3 voltage-gated potassium channels in a similar potency. It acts as a gating-modifier toxin that shifts the voltage-dependence of ERG activation in the positive direction and suppresses its current amplitudes elicited by strong depolarizing pulses. On sodium channels, it blocks Nav1.2/SCN2A (EC(50)=31 nM), Nav1.3/SCN3A, Nav1.4/SCN4A, Nav1.5/SCN5A, Nav1.6/SCN8A, Nav1.8/SCN10A (EC(50)=92 nM). It may act by binding at site 1 or close by, only when the pore is in an open configuration. Shows antibacterial activity against the Gram-negative bacterium S.typhimurium, but not on the bacteria B.subtilis, S.aureus, and P.aeruginosa. In vivo, this toxin does not induce neurotoxic symptoms when injected into mice. This is Kappa-actitoxin-Ael2a from Anthopleura elegantissima (Green aggregating anemone).